A 2971-amino-acid polypeptide reads, in one-letter code: Reticulocyte-binding protein homolog 1 (2971 aa).

The signal sequence occupies residues 1-20; sequence MQRWIFCNIVLHILIYLAEF. The Extracellular segment spans residues 21–2897; that stretch reads SHEQESYSSN…KKQKNGNHER (2877 aa). Residues 30 to 50 form a disordered region; that stretch reads NEKIRKDYSDDNNYEPTPSYE. N-linked (GlcNAc...) asparagine glycans are attached at residues asparagine 70, asparagine 78, asparagine 87, asparagine 135, asparagine 286, asparagine 384, and asparagine 417. Residues 500-833 are erythrocyte binding domain (EBD); that stretch reads LQIVQQKLLE…MQQGYNNLTN (334 aa). LRR repeat units follow at residues 528 to 553 and 607 to 633; these read YKNIHDEILNKKNNEITKIIINNIKD and LNNLHTLKQVQNNKIKYEEHIKQILQK. Asparagine 685 carries N-linked (GlcNAc...) asparagine glycosylation. LRR repeat units lie at residues 736–758 and 785–808; these read IDTISKYILKQKDIELTQHVYTD and QETLKQITHIVNNIKTIKKDLLKE. 4 N-linked (GlcNAc...) asparagine glycosylation sites follow: asparagine 830, asparagine 892, asparagine 1000, and asparagine 1010. 2 LRR repeats span residues 993–1018 and 1356–1381; these read LKILKILNISLKACEKNNKSINTLND and LRNINLQEIKNNIIKIFKEFKSAHKE. Residue asparagine 1425 is glycosylated (N-linked (GlcNAc...) asparagine). Residues 1466-1489 form an LRR 7 repeat; that stretch reads AKYMENIDTYKNNIEIISKQINPE. Residue asparagine 1496 is glycosylated (N-linked (GlcNAc...) asparagine). 3 LRR repeats span residues 1512–1537, 1586–1609, and 1611–1636; these read YKQINNIIINSNQLKNEAFTIDELQN, SQNINHVSIYTEQLHNLYIKLEEE, and EQMKTLYHKSNVLHNQINFNEDAFIN. N-linked (GlcNAc...) asparagine glycosylation is found at asparagine 1664, asparagine 1692, asparagine 1718, asparagine 1816, and asparagine 1844. 2 LRR repeats span residues 1700 to 1723 and 1809 to 1834; these read LQELKQVQENVEKVKDIYNQTIKY and LKLFVDINSTNNNLDNMLSEINSIQN. Residues 1880-1903 form an LRR 13 repeat; sequence QNEIRNMNLEKNFMLDKSKKIDEE. Asparagine 1913 and asparagine 1918 each carry an N-linked (GlcNAc...) asparagine glycan. The stretch at 1944-1967 is one LRR 14 repeat; that stretch reads KENIEKIKQEINTLSDVFKKPFFF. Asparagine 2054, asparagine 2207, asparagine 2289, asparagine 2300, asparagine 2338, and asparagine 2405 each carry an N-linked (GlcNAc...) asparagine glycan. One copy of the LRR 15 repeat lies at 2523–2548; that stretch reads IKDIDNVFIKIQNNKFEQIQKYIEII. N-linked (GlcNAc...) asparagine glycans are attached at residues asparagine 2598 and asparagine 2752. An LRR 16 repeat occupies 2731-2754; it reads ENIFDNIQLKKKDIDDIIININNT. 2 stretches are compositionally biased toward basic and acidic residues: residues 2773–2782 and 2795–2804; these read KVDEKSEINN and QKNKIKDHNL. Disordered regions lie at residues 2773-2825 and 2840-2862; these read KVDE…MKEQ and HHVHNHNHNHNQNQKDSTKLQEQ. N-linked (GlcNAc...) asparagine glycosylation occurs at asparagine 2811. Over residues 2814–2825 the composition is skewed to basic and acidic residues; sequence EESHQNEQMKEQ. A helical membrane pass occupies residues 2898–2918; the sequence is MYFASGIVVSILFLSSLGFVI. Topologically, residues 2919 to 2971 are cytoplasmic; sequence NSKNNKQEYDKEQEKQQQNDFVCDNNKMDDKSTQKYGRNQEEVMEISFDNDYI.

In terms of assembly, may in part interact with AMA1 in the moving tight junction between the parasite and the erythrocyte membranes; the interaction may facilitate junction formation and active invasion. Post-translationally, proteolytically processed into multiple fragments following schizont rupture. In the mature schizont stage prior to merozoite release, full length RH1 is processed post-Golgi into a 240 kDa N-terminal form and a 120 kDa C-terminal form containing the transmembrane region. Both forms appear not to form a complex. However, they appear to remain in close proximity in late schizonts. Following merozoite invasion of host erythrocytes, the 240 kDa form is further processed into a 140 kDa form which may be involved in the disengagement of the ligand-receptor complex required during the invasion process. Also, the 120 kDa is further cleaved into a 110 kDa form and a transmembrane 9 kDa form probably by ROM4.

The protein resides in the cell membrane. Its subcellular location is the secreted. It localises to the cell junction. The protein localises to the tight junction. It is found in the cytoplasmic vesicle. The protein resides in the secretory vesicle. Its subcellular location is the rhoptry. In terms of biological role, during the asexual blood stage, binds to a sialic acid containing receptor on the surface of the host erythrocyte and thus is involved in merozoite invasion. Binds erythrocytes via a neuraminidase sensitive and trypsin-, chymotrypsin-resistant receptor. After merozoite attachment and reorientation, RH1 binding to its erythrocyte receptor triggers an increase in intracellular Ca(2+) within the parasite resulting in the release of microneme proteins such as EBA175 which in turn leads to the formation of the tight junction between parasite and host cell. The protein is Reticulocyte-binding protein homolog 1 of Plasmodium falciparum (isolate 3D7).